A 134-amino-acid polypeptide reads, in one-letter code: Acyl carrier protein, chloroplastic (134 aa).

The transit peptide at 1–51 directs the protein to the chloroplast; the sequence is MATTFSASVSMQATSLATTTRISFQKPVLVSNHGRTNLSFNLSRTRLSISC. The Carrier domain occupies 55–130; that stretch reads QETVEKVSEI…QAAELIEELM (76 aa). Residue Ser-90 is modified to O-(pantetheine 4'-phosphoryl)serine.

This sequence belongs to the acyl carrier protein (ACP) family. In terms of processing, 4'-phosphopantetheine is transferred from CoA to a specific serine of apo-ACP by acpS. This modification is essential for activity because fatty acids are bound in thioester linkage to the sulfhydryl of the prosthetic group. Seed.

Its subcellular location is the plastid. It localises to the chloroplast. It functions in the pathway lipid metabolism; fatty acid biosynthesis. In terms of biological role, carrier of the growing fatty acid chain in fatty acid biosynthesis. This Brassica napus (Rape) protein is Acyl carrier protein, chloroplastic (ACL1.C1).